The following is a 164-amino-acid chain: UPF0304 protein ECA3037 (164 aa).

Belongs to the UPF0304 family.

The sequence is that of UPF0304 protein ECA3037 from Pectobacterium atrosepticum (strain SCRI 1043 / ATCC BAA-672) (Erwinia carotovora subsp. atroseptica).